Reading from the N-terminus, the 605-residue chain is Elongation factor 4 (605 aa).

Residues 11-193 enclose the tr-type G domain; that stretch reads KNIRNFSIIA…RLVDVIPAPE (183 aa). GTP-binding positions include 23–28 and 140–143; these read DHGKST and NKID.

It belongs to the TRAFAC class translation factor GTPase superfamily. Classic translation factor GTPase family. LepA subfamily.

The protein localises to the cell inner membrane. The catalysed reaction is GTP + H2O = GDP + phosphate + H(+). Functionally, required for accurate and efficient protein synthesis under certain stress conditions. May act as a fidelity factor of the translation reaction, by catalyzing a one-codon backward translocation of tRNAs on improperly translocated ribosomes. Back-translocation proceeds from a post-translocation (POST) complex to a pre-translocation (PRE) complex, thus giving elongation factor G a second chance to translocate the tRNAs correctly. Binds to ribosomes in a GTP-dependent manner. This is Elongation factor 4 from Acinetobacter baylyi (strain ATCC 33305 / BD413 / ADP1).